A 118-amino-acid polypeptide reads, in one-letter code: UPF0102 protein RHA1_ro06551 (118 aa).

Belongs to the UPF0102 family.

The chain is UPF0102 protein RHA1_ro06551 from Rhodococcus jostii (strain RHA1).